The sequence spans 518 residues: Xylose import ATP-binding protein XylG (518 aa).

ABC transporter domains lie at 6 to 245 (LQMN…VGRE) and 262 to 507 (FEAR…LSHP). ATP is bound at residue 38–45 (GENGTGKS).

This sequence belongs to the ABC transporter superfamily. Xylose importer (TC 3.A.1.2.4) family. As to quaternary structure, the complex is composed of two ATP-binding proteins (XylG), two transmembrane proteins (XylH) and a solute-binding protein (XylF).

It is found in the cell inner membrane. It carries out the reaction D-xylose(out) + ATP + H2O = D-xylose(in) + ADP + phosphate + H(+). Its function is as follows. Part of the ABC transporter complex XylFGH involved in xylose import. Responsible for energy coupling to the transport system. The protein is Xylose import ATP-binding protein XylG of Pseudomonas savastanoi pv. phaseolicola (strain 1448A / Race 6) (Pseudomonas syringae pv. phaseolicola (strain 1448A / Race 6)).